The sequence spans 233 residues: 5'-methylthioadenosine/S-adenosylhomocysteine nucleosidase (233 aa).

Glu12 (proton acceptor) is an active-site residue. Substrate is bound by residues Gly78, Ile156, and 177–178; that span reads ME. The active-site Proton donor is Asp201.

It belongs to the PNP/UDP phosphorylase family. MtnN subfamily.

The enzyme catalyses S-adenosyl-L-homocysteine + H2O = S-(5-deoxy-D-ribos-5-yl)-L-homocysteine + adenine. It carries out the reaction S-methyl-5'-thioadenosine + H2O = 5-(methylsulfanyl)-D-ribose + adenine. The catalysed reaction is 5'-deoxyadenosine + H2O = 5-deoxy-D-ribose + adenine. Its pathway is amino-acid biosynthesis; L-methionine biosynthesis via salvage pathway; S-methyl-5-thio-alpha-D-ribose 1-phosphate from S-methyl-5'-thioadenosine (hydrolase route): step 1/2. In terms of biological role, catalyzes the irreversible cleavage of the glycosidic bond in both 5'-methylthioadenosine (MTA) and S-adenosylhomocysteine (SAH/AdoHcy) to adenine and the corresponding thioribose, 5'-methylthioribose and S-ribosylhomocysteine, respectively. Also cleaves 5'-deoxyadenosine, a toxic by-product of radical S-adenosylmethionine (SAM) enzymes, into 5-deoxyribose and adenine. The polypeptide is 5'-methylthioadenosine/S-adenosylhomocysteine nucleosidase (Listeria monocytogenes serotype 4b (strain CLIP80459)).